A 178-amino-acid chain; its full sequence is MKRWLMVVPLALFLLVAVFLYRGLYLDPAELPSRMIGKPFPAFNLPTVHGDKTLTQADLRGKPALVNVWATWCISCRVEHPVLNKLAEKGVVIYGINYKDDNAAALKWLAEFHNPYQLDIRDEDGNLGLNLGVYGAPETFFIDAKGVIRDKYVGVIDEVVWRDELAAKYQALVDEAKP.

The Cytoplasmic portion of the chain corresponds to 1-3 (MKR). The helical transmembrane segment at 4 to 24 (WLMVVPLALFLLVAVFLYRGL) threads the bilayer. Residues 25–178 (YLDPAELPSR…YQALVDEAKP (154 aa)) lie on the Periplasmic side of the membrane. The region spanning 34 to 178 (RMIGKPFPAF…YQALVDEAKP (145 aa)) is the Thioredoxin domain. Residues cysteine 73 and cysteine 76 are joined by a disulfide bond.

This sequence belongs to the thioredoxin family. DsbE subfamily.

It is found in the cell inner membrane. Functionally, involved in disulfide bond formation. Catalyzes a late, reductive step in the assembly of periplasmic c-type cytochromes, probably the reduction of disulfide bonds of the apocytochrome c to allow covalent linkage with the heme. Possible subunit of a heme lyase. In Pseudomonas fluorescens biotype C, this protein is Thiol:disulfide interchange protein DsbE (dsbE).